The sequence spans 114 residues: Secretoglobin family 2B member 2 (114 aa).

A signal peptide spans 1–23 (MKGTLLLLALLVTGELGFQRTEA).

It belongs to the secretoglobin family. As to expression, expressed in lacrimal gland.

It localises to the secreted. The polypeptide is Secretoglobin family 2B member 2 (Scgb2b2) (Mus musculus (Mouse)).